We begin with the raw amino-acid sequence, 447 residues long: Mannose/glucose-specific lectin (447 aa).

Tandem repeats lie at residues S1–V149, P150–R295, and D296–V447. A 3 X approximate tandem repeats region spans residues S1 to V447. 3 Jacalin-type lectin domains span residues M5–P148, T153–P294, and S300–P443.

This sequence belongs to the jacalin lectin family. As to quaternary structure, homodimer. The N-terminus is blocked.

Its function is as follows. Mannose/glucose specific lectin. Shows agglutinating activity against rabbit erythrocytes. This chain is Mannose/glucose-specific lectin, found in Parkia platycephala.